Reading from the N-terminus, the 441-residue chain is C-terminal-binding protein 1 (441 aa).

Positions 1–70 (MGSSHLLNKG…EIHEKVLNEA (70 aa)) are interaction with GLIS2 1. Residues serine 100, 180–185 (IGLGRV), aspartate 204, 237–243 (CGLNEHN), 264–266 (TAR), and aspartate 290 each bind NAD(+). Residue arginine 266 is part of the active site. The interaction with GLIS2 2 stretch occupies residues 288-360 (ALDVHESEPF…VNKDHLTAAT (73 aa)). Residue glutamate 295 is part of the active site. Residue serine 300 is modified to Phosphoserine. Histidine 315 (proton donor) is an active-site residue. Residue 315-318 (HAAW) participates in NAD(+) binding. The interval 409–441 (SHGLPPVAHPPHAPSPGQTVKPEADRDHTSDQL) is disordered. Phosphoserine is present on serine 423. Residue lysine 429 forms a Glycyl lysine isopeptide (Lys-Gly) (interchain with G-Cter in SUMO) linkage. A compositionally biased stretch (basic and acidic residues) spans 430–441 (PEADRDHTSDQL).

The protein belongs to the D-isomer specific 2-hydroxyacid dehydrogenase family. In terms of assembly, homo- or heterodimer. Heterodimer with CTBP2. Interacts with ELK3 (via its PXDLS motif). Interacts with RBBP8 (via its PXDLS motif). Interacts with PNN, MECOM and ZFHX1B. Interacts with ZNF366 (via PXDLS motif). Interaction with SATB1 (non-acetylated form); the interaction stabilizes its attachment to DNA and promotes transcription repression. Interacts with PRDM16; the interaction represses white adipose tissue (WAT)-specific genes expression. Interacts with GLIS2, HIPK2, FOXP1, FOXP2, HDAC4, HDAC5, HDAC9, NRIP1, WIZ and ZNF217. Interacts with BCL6; the interaction is required for BCL6 transcriptional autoinhibition and inhibition of some BCL6 target genes. Interacts with IKZF4. Interacts with MCRIP1 (unphosphorylated form, via the PXDLS motif); competitively inhibiting CTBP-ZEB1 interaction. Interacts with Bassoon/BSN; this interaction targets and anchors CTBP1 to presynapses. Interacts with SIMC1. Requires NAD(+) as cofactor. In terms of processing, ADP-ribosylated; when cells are exposed to brefeldin A. The level of phosphorylation appears to be regulated during the cell cycle. Phosphorylation by HIPK2 on Ser-423 induces proteasomal degradation. Post-translationally, sumoylation on Lys-429 is promoted by the E3 SUMO-protein ligase CBX4. Expressed in a wide range of adult tissues.

It localises to the cytoplasm. It is found in the nucleus. In terms of biological role, corepressor targeting diverse transcription regulators such as GLIS2 or BCL6. Has dehydrogenase activity. Involved in controlling the equilibrium between tubular and stacked structures in the Golgi complex. Functions in brown adipose tissue (BAT) differentiation. The protein is C-terminal-binding protein 1 (Ctbp1) of Mus musculus (Mouse).